We begin with the raw amino-acid sequence, 699 residues long: DNA topoisomerase 1 (699 aa).

Basic and acidic residues-rich tracts occupy residues 1–15 and 22–35; these read MAKS…KNEL and IELK…ESKG. The disordered stretch occupies residues 1–37; it reads MAKSKVVEKDKKNELDNQSADIELKGQSKNEESKGGK. In terms of domain architecture, Toprim spans 38–146; sequence KKVIIVESPA…NIITFTEITE (109 aa). Residues Glu-44 and Asp-115 each coordinate Mg(2+). The Topo IA-type catalytic domain maps to 160 to 583; that stretch reads DMNKVNAQLA…SFLKEFNKDL (424 aa). The tract at residues 194-199 is interaction with DNA; sequence SAGRVQ. Residue Tyr-324 is the O-(5'-phospho-DNA)-tyrosine intermediate of the active site. The C4-type zinc finger occupies 601 to 624; the sequence is CEDCSGNYKLKVGKYGLYLHCPNC. The tract at residues 649–699 is disordered; the sequence is QESQEENGEKNSVQSEESSANSGNRKFYRKRRTSGSKKSSTKSASSKAKKK. Polar residues predominate over residues 661 to 672; the sequence is VQSEESSANSGN. The span at 674 to 683 shows a compositional bias: basic residues; that stretch reads KFYRKRRTSG. Positions 684-699 are enriched in low complexity; that stretch reads SKKSSTKSASSKAKKK.

It belongs to the type IA topoisomerase family. As to quaternary structure, monomer. Mg(2+) is required as a cofactor.

The catalysed reaction is ATP-independent breakage of single-stranded DNA, followed by passage and rejoining.. Functionally, releases the supercoiling and torsional tension of DNA, which is introduced during the DNA replication and transcription, by transiently cleaving and rejoining one strand of the DNA duplex. Introduces a single-strand break via transesterification at a target site in duplex DNA. The scissile phosphodiester is attacked by the catalytic tyrosine of the enzyme, resulting in the formation of a DNA-(5'-phosphotyrosyl)-enzyme intermediate and the expulsion of a 3'-OH DNA strand. The free DNA strand then undergoes passage around the unbroken strand, thus removing DNA supercoils. Finally, in the religation step, the DNA 3'-OH attacks the covalent intermediate to expel the active-site tyrosine and restore the DNA phosphodiester backbone. This chain is DNA topoisomerase 1, found in Fervidobacterium islandicum.